The following is a 160-amino-acid chain: Cyclic pyranopterin monophosphate synthase (160 aa).

Residues 75 to 77 and 113 to 114 each bind substrate; these read LCH and ME. The active site involves aspartate 128.

This sequence belongs to the MoaC family. As to quaternary structure, homohexamer; trimer of dimers.

The enzyme catalyses (8S)-3',8-cyclo-7,8-dihydroguanosine 5'-triphosphate = cyclic pyranopterin phosphate + diphosphate. The protein operates within cofactor biosynthesis; molybdopterin biosynthesis. Catalyzes the conversion of (8S)-3',8-cyclo-7,8-dihydroguanosine 5'-triphosphate to cyclic pyranopterin monophosphate (cPMP). This Methylobacterium nodulans (strain LMG 21967 / CNCM I-2342 / ORS 2060) protein is Cyclic pyranopterin monophosphate synthase.